Consider the following 562-residue polypeptide: Sperm-tail PG-rich repeat-containing protein 2 (562 aa).

STPGR repeat units lie at residues 21–31, 60–73, and 96–118; these read GPGTYNINRSL, SPGP…ITRN, and PGPG…AKSP. Disordered regions lie at residues 114–136 and 192–215; these read KAKS…APSI and SGRR…QEDQ. Positions 127 to 136 are enriched in low complexity; it reads PSLSPAAPSI. A compositionally biased stretch (basic and acidic residues) spans 193–202; sequence GRREPLKGAD. STPGR repeat units follow at residues 204–227, 253–271, 336–350, 385–409, 425–462, and 478–492; these read PGPG…VKRE, PGPG…SNTH, TPGP…YGLA, TPGP…TAAF, TPPP…SCFL, and TPGP…KSSS. The disordered stretch occupies residues 543 to 562; it reads STRSLSSHRSWRKPTAHSSA. Residues 551–562 are compositionally biased toward basic residues; sequence RSWRKPTAHSSA.

The chain is Sperm-tail PG-rich repeat-containing protein 2 (stpg2) from Danio rerio (Zebrafish).